The following is a 530-amino-acid chain: Bifunctional purine biosynthesis protein PurH (530 aa).

The MGS-like domain occupies 1–147 (MPSIKRALIS…KNWKHVAIVT (147 aa)).

It belongs to the PurH family.

It catalyses the reaction (6R)-10-formyltetrahydrofolate + 5-amino-1-(5-phospho-beta-D-ribosyl)imidazole-4-carboxamide = 5-formamido-1-(5-phospho-D-ribosyl)imidazole-4-carboxamide + (6S)-5,6,7,8-tetrahydrofolate. The enzyme catalyses IMP + H2O = 5-formamido-1-(5-phospho-D-ribosyl)imidazole-4-carboxamide. It functions in the pathway purine metabolism; IMP biosynthesis via de novo pathway; 5-formamido-1-(5-phospho-D-ribosyl)imidazole-4-carboxamide from 5-amino-1-(5-phospho-D-ribosyl)imidazole-4-carboxamide (10-formyl THF route): step 1/1. It participates in purine metabolism; IMP biosynthesis via de novo pathway; IMP from 5-formamido-1-(5-phospho-D-ribosyl)imidazole-4-carboxamide: step 1/1. The sequence is that of Bifunctional purine biosynthesis protein PurH from Neisseria meningitidis serogroup A / serotype 4A (strain DSM 15465 / Z2491).